Here is a 315-residue protein sequence, read N- to C-terminus: Ribosomal RNA small subunit methyltransferase H (315 aa).

S-adenosyl-L-methionine is bound by residues 36 to 38, Asp56, Phe80, Asp102, and Gln109; that span reads GGH.

This sequence belongs to the methyltransferase superfamily. RsmH family.

It is found in the cytoplasm. The enzyme catalyses cytidine(1402) in 16S rRNA + S-adenosyl-L-methionine = N(4)-methylcytidine(1402) in 16S rRNA + S-adenosyl-L-homocysteine + H(+). Specifically methylates the N4 position of cytidine in position 1402 (C1402) of 16S rRNA. This Proteus mirabilis (strain HI4320) protein is Ribosomal RNA small subunit methyltransferase H.